Here is a 195-residue protein sequence, read N- to C-terminus: Imidazoleglycerol-phosphate dehydratase (195 aa).

This sequence belongs to the imidazoleglycerol-phosphate dehydratase family.

It localises to the cytoplasm. The enzyme catalyses D-erythro-1-(imidazol-4-yl)glycerol 3-phosphate = 3-(imidazol-4-yl)-2-oxopropyl phosphate + H2O. It participates in amino-acid biosynthesis; L-histidine biosynthesis; L-histidine from 5-phospho-alpha-D-ribose 1-diphosphate: step 6/9. The chain is Imidazoleglycerol-phosphate dehydratase from Campylobacter curvus (strain 525.92).